A 197-amino-acid polypeptide reads, in one-letter code: Outer-membrane lipoprotein LolB (197 aa).

An N-terminal signal peptide occupies residues 1–20 (MNRSRRLALFCLGAPLLLQA). The N-palmitoyl cysteine moiety is linked to residue Cys-21. Cys-21 carries S-diacylglycerol cysteine lipidation.

Belongs to the LolB family. As to quaternary structure, monomer.

The protein localises to the cell outer membrane. Plays a critical role in the incorporation of lipoproteins in the outer membrane after they are released by the LolA protein. This Cupriavidus necator (strain ATCC 17699 / DSM 428 / KCTC 22496 / NCIMB 10442 / H16 / Stanier 337) (Ralstonia eutropha) protein is Outer-membrane lipoprotein LolB.